The following is a 581-amino-acid chain: Glutamyl-tRNA reductase (581 aa).

Substrate-binding positions include 49–52 (TCNR), S109, 114–116 (EGQ), and Q120. The Nucleophile role is filled by C50. NADP(+) is bound at residue 192-197 (GAGSMS). Residues 292–416 (PAVEDTAVQE…AEAPRPQPVL (125 aa)) form an insert region.

It belongs to the glutamyl-tRNA reductase family. In terms of assembly, homodimer.

It catalyses the reaction (S)-4-amino-5-oxopentanoate + tRNA(Glu) + NADP(+) = L-glutamyl-tRNA(Glu) + NADPH + H(+). It functions in the pathway porphyrin-containing compound metabolism; protoporphyrin-IX biosynthesis; 5-aminolevulinate from L-glutamyl-tRNA(Glu): step 1/2. Its function is as follows. Catalyzes the NADPH-dependent reduction of glutamyl-tRNA(Glu) to glutamate 1-semialdehyde (GSA). The protein is Glutamyl-tRNA reductase of Streptomyces coelicolor (strain ATCC BAA-471 / A3(2) / M145).